Reading from the N-terminus, the 419-residue chain is 3-isopropylmalate dehydratase large subunit (419 aa).

Positions 300, 360, and 363 each coordinate [4Fe-4S] cluster.

Belongs to the aconitase/IPM isomerase family. LeuC type 2 subfamily. In terms of assembly, heterodimer of LeuC and LeuD. The cofactor is [4Fe-4S] cluster.

It catalyses the reaction (2R,3S)-3-isopropylmalate = (2S)-2-isopropylmalate. Its pathway is amino-acid biosynthesis; L-leucine biosynthesis; L-leucine from 3-methyl-2-oxobutanoate: step 2/4. Catalyzes the isomerization between 2-isopropylmalate and 3-isopropylmalate, via the formation of 2-isopropylmaleate. The sequence is that of 3-isopropylmalate dehydratase large subunit from Acetivibrio thermocellus (strain ATCC 27405 / DSM 1237 / JCM 9322 / NBRC 103400 / NCIMB 10682 / NRRL B-4536 / VPI 7372) (Clostridium thermocellum).